The primary structure comprises 809 residues: Phenylalanine--tRNA ligase beta subunit (809 aa).

Positions 39-154 (APPTSKIVVG…EDTPVGQDIR (116 aa)) constitute a tRNA-binding domain. Residues 405-480 (PQRAPVKMRV…RIYGFEKIPA (76 aa)) form the B5 domain. Mg(2+) contacts are provided by aspartate 458, aspartate 464, glutamate 467, and glutamate 468. One can recognise an FDX-ACB domain in the interval 707–808 (SKFPPVRRDI…RMARAGARLR (102 aa)).

It belongs to the phenylalanyl-tRNA synthetase beta subunit family. Type 1 subfamily. Tetramer of two alpha and two beta subunits. Mg(2+) serves as cofactor.

The protein resides in the cytoplasm. It catalyses the reaction tRNA(Phe) + L-phenylalanine + ATP = L-phenylalanyl-tRNA(Phe) + AMP + diphosphate + H(+). This chain is Phenylalanine--tRNA ligase beta subunit, found in Burkholderia lata (strain ATCC 17760 / DSM 23089 / LMG 22485 / NCIMB 9086 / R18194 / 383).